The following is a 612-amino-acid chain: Chaperone protein DnaK (612 aa).

Threonine 174 is subject to Phosphothreonine; by autocatalysis. The segment at glycine 578–lysine 612 is disordered. Over residues asparagine 586–asparagine 598 the composition is skewed to polar residues.

The protein belongs to the heat shock protein 70 family.

Acts as a chaperone. This is Chaperone protein DnaK from Thermoanaerobacter sp. (strain X514).